We begin with the raw amino-acid sequence, 712 residues long: Dynamin-1-like protein drp-1 (712 aa).

The region spanning 24–304 (QIQLPQIVVV…LMHHIRNCLP (281 aa)) is the Dynamin-type G domain. The segment at 34–41 (GSQSAGKS) is G1 motif. Positions 60-62 (VTR) are G2 motif. Residues 148–151 (DLPG) form a G3 motif region. Positions 217-220 (TKLD) are G4 motif. The G5 motif stretch occupies residues 247-250 (VNRS). Residues 280–502 (SRNGTPYLAK…LAYINTKHPE (223 aa)) form an interaction with caspase ced-9 region. Positions 523 to 542 (GRSRNRHASTGERAVSAHGE) are disordered. The 92-residue stretch at 620-711 (VAIIERLIRN…IISEVRETQV (92 aa)) folds into the GED domain.

The protein belongs to the TRAFAC class dynamin-like GTPase superfamily. Dynamin/Fzo/YdjA family. As to quaternary structure, interacts (via residues 280-502) with caspase ced-9; the interaction is enhanced by GTP rather than GDP; the interaction is probably direct and may occur at the mitochondrion. As to expression, highly expressed in neurons, in intestinal cells and in the body wall, pharyngeal, and vulval muscles.

Its subcellular location is the mitochondrion. It is found in the mitochondrion outer membrane. The protein localises to the cytoplasm. The protein resides in the cytosol. It carries out the reaction GTP + H2O = GDP + phosphate + H(+). With respect to regulation, GTPase activity is increased by binding to phospholipid membranes. Functionally, functions in mitochondrial division. Functions in peroxisomal division. Mediates membrane fission, perhaps mainly of the mitochondrial outer membrane. Mitochondrial fission may be promoted by recruitment to mitochondrial membranes via the egl-1/ced-9 complex. Involved in the coordination of mitochondrial division with autophagy in response to acute heat stress during larval development. Plays a role in apoptosis by promoting mitochondrial elimination and cell-death execution, acting downstream of caspase ced-3, and perhaps independently of FIS1-related protein fis-2, caspase ced-9 and apoptosis-inducing factor AIFM/wah-1. Role in promoting apoptosis dependent upon cleavage of drp-1 by ced-3. Involved in negatively modulating longevity in concert with the Insulin/IGF-1-like signaling (IIS) mediated pathway. In Caenorhabditis elegans, this protein is Dynamin-1-like protein drp-1.